The sequence spans 87 residues: Cell division protein FtsL (87 aa).

Over 1-6 (MNKSNF) the chain is Cytoplasmic. Residues 7-23 (FLLLAVCVSAFSVVMQQ) form a helical membrane-spanning segment. Over 24-87 (NQYRLNFTAL…GNTFMVEHQR (64 aa)) the chain is Periplasmic. Residues 31-71 (TALDKAKKQEIALEQDYAQMRLQQARLANHEAIRAAAEKQN) adopt a coiled-coil conformation. Residues 68 to 87 (EKQNLHPPVSGNTFMVEHQR) form a disordered region.

This sequence belongs to the FtsL family. As to quaternary structure, part of a complex composed of FtsB, FtsL and FtsQ.

The protein resides in the cell inner membrane. Functionally, essential cell division protein. May link together the upstream cell division proteins, which are predominantly cytoplasmic, with the downstream cell division proteins, which are predominantly periplasmic. In Neisseria gonorrhoeae (strain ATCC 700825 / FA 1090), this protein is Cell division protein FtsL.